A 129-amino-acid polypeptide reads, in one-letter code: Small ribosomal subunit protein uS13 (129 aa).

Residues 95–114 are compositionally biased toward basic residues; that stretch reads NLPVRGQRTKTNARTRRGPR. The interval 95–129 is disordered; the sequence is NLPVRGQRTKTNARTRRGPRKTVAGRGQKRGATKK.

This sequence belongs to the universal ribosomal protein uS13 family. As to quaternary structure, part of the 30S ribosomal subunit. Forms a loose heterodimer with protein S19. Forms two bridges to the 50S subunit in the 70S ribosome.

Functionally, located at the top of the head of the 30S subunit, it contacts several helices of the 16S rRNA. In the 70S ribosome it contacts the 23S rRNA (bridge B1a) and protein L5 of the 50S subunit (bridge B1b), connecting the 2 subunits; these bridges are implicated in subunit movement. Contacts the tRNAs in the A and P-sites. The protein is Small ribosomal subunit protein uS13 of Dehalococcoides mccartyi (strain ATCC BAA-2100 / JCM 16839 / KCTC 5957 / BAV1).